Reading from the N-terminus, the 281-residue chain is Glyoxalase 1 (281 aa).

VOC domains follow at residues 4–127 (RALH…IGKA) and 132–251 (KVLR…FVGD).

This sequence belongs to the glyoxalase I family.

In terms of biological role, thought to act as a glyoxalase. May remove methylglyoxal from mitochondrial proteins. Has roles in reducing oxidative stress and increasing lifespan. This is Glyoxalase 1 from Caenorhabditis briggsae.